The primary structure comprises 50 residues: ITFQGCSPARQTVITNAITRARADVRAAVSALPTKAPVSTFSTWFGVYND.

It catalyses the reaction Endohydrolysis of the N-glycosidic bond at one specific adenosine on the 28S rRNA.. In terms of biological role, N-glycosylase that inhibits protein synthesis by depurinating ribosomal rRNA, and thus acts as a ribosomal inactivating protein (RIP). Has adenine polynucleotide glycosidase activity on the poly(A) substrate A30-ssDNA. Inhibits cell-free translation in rabbit reticulocyte lysate system with an IC(50) of 1 nM. May function in the defense response to pathogens. Displays antifungal activity against C.comatus and P.piricola, but not against R.solani, M.arachidicola and C.gossypii. Inhibits mycelial growth in P.piricola with an IC(50) of 2.5 uM. Has cytotoxic activity against the human cancer cell lines Hela, HepG2, and JAR, with IC(50) of 358.8, 489.8, and 926.9 nM respectively. It also inhibits HIV-1 reverse transcriptase activity (IC(50)=7.9 nM) and disrupts mouse embryonic development. The chain is Ribosome-inactivating protein lyophyllin from Lyophyllum shimeji (Hon-shimeji).